The chain runs to 115 residues: Vespryn (115 aa).

Positions 1–15 (MTWLLLCLLAQYENG) are cleaved as a signal peptide. The B30.2/SPRY domain occupies 22-115 (SSSAKPYKTS…VKRKDHLRLT (94 aa)).

The protein belongs to the ohanin/vespryn family. As to expression, expressed by the venom gland.

It localises to the secreted. In terms of biological role, neurotoxin that produces dose-dependent hypolocomotion and hyperalgesia in mice. May directly act on the central nervous system, as it is 6500-fold more potent when administered intracerebroventricularly than intraperitoneal. This Pogona barbata (Bearded dragon) protein is Vespryn.